Here is a 180-residue protein sequence, read N- to C-terminus: Large ribosomal subunit protein uL6 (180 aa).

This sequence belongs to the universal ribosomal protein uL6 family. As to quaternary structure, part of the 50S ribosomal subunit.

Functionally, this protein binds to the 23S rRNA, and is important in its secondary structure. It is located near the subunit interface in the base of the L7/L12 stalk, and near the tRNA binding site of the peptidyltransferase center. The polypeptide is Large ribosomal subunit protein uL6 (Borrelia hermsii (strain HS1 / DAH)).